The following is a 178-amino-acid chain: Peptide methionine sulfoxide reductase MsrA (178 aa).

The active site involves cysteine 11.

Belongs to the MsrA Met sulfoxide reductase family.

It catalyses the reaction L-methionyl-[protein] + [thioredoxin]-disulfide + H2O = L-methionyl-(S)-S-oxide-[protein] + [thioredoxin]-dithiol. The catalysed reaction is [thioredoxin]-disulfide + L-methionine + H2O = L-methionine (S)-S-oxide + [thioredoxin]-dithiol. In terms of biological role, has an important function as a repair enzyme for proteins that have been inactivated by oxidation. Catalyzes the reversible oxidation-reduction of methionine sulfoxide in proteins to methionine. The polypeptide is Peptide methionine sulfoxide reductase MsrA (Natronomonas pharaonis (strain ATCC 35678 / DSM 2160 / CIP 103997 / JCM 8858 / NBRC 14720 / NCIMB 2260 / Gabara) (Halobacterium pharaonis)).